Consider the following 1531-residue polypeptide: Slit homolog 1 protein (1531 aa).

Positions 1–33 (MALTPQRGSSSGLSRPELWLLLWAAAWRLGATA) are cleaved as a signal peptide. Residues 34–61 (CPALCTCTGTTVDCHGTGLQAIPKNIPR) form the LRRNT domain. LRR repeat units lie at residues 62 to 83 (NTER…DFAG), 86 to 107 (QLRV…AFDD), 110 to 131 (ELER…LFQN), 134 to 155 (ALSR…AFRG), 158 to 179 (DLKN…AFRA), and 182 to 203 (GLEV…SFNH). Asn72 carries N-linked (GlcNAc...) asparagine glycosylation. The N-linked (GlcNAc...) asparagine glycan is linked to Asn192. The LRRCT 1 domain occupies 215 to 265 (NHLFCDCHLAWLSQWLRQRPTIGLFTQCSGPASLRGLNVAEVQKSEFSCSG). Residues 273–309 (PACTLSSGSCPAMCSCSNGIVDCRGKGLTAIPANLPE) form the LRRNT 2 domain. Residues Cys286 and Cys295 are joined by a disulfide bond. LRR repeat units lie at residues 310 to 331 (TMTE…AFSP), 334 to 355 (KLRR…AFQG), 358 to 379 (SLNS…VFGG), 382 to 403 (TLQL…AFQD), and 406 to 427 (NLSL…TFTS). N-linked (GlcNAc...) asparagine glycosylation occurs at Asn406. Positions 439–489 (NPFICDCNLKWLADFLRTNPIETTGARCASPRRLANKRIGQIKSKKFRCSA) constitute an LRRCT 2 domain. Disulfide bonds link Cys443–Cys466, Cys445–Cys487, Cys513–Cys519, and Cys517–Cys526. In terms of domain architecture, LRRNT 3 spans 504–540 (NSECTSDVACPHKCRCEASVVECSGLKLSKIPERIPQ). LRR repeat units lie at residues 541–562 (STTE…GLFK), 566–587 (HLKK…TFEG), 590–611 (SVSE…MFRG), 614–635 (GLRT…SFTG), and 638–659 (NVRL…AFDT). Residue Asn571 is glycosylated (N-linked (GlcNAc...) asparagine). Asn630 carries an N-linked (GlcNAc...) asparagine glycan. Residues 671 to 721 (NPFNCNCQLAWLGDWLRKRKIVTGNPRCQNPDFLRQIPLQDVAFPDFRCEE) form the LRRCT 3 domain. Intrachain disulfides connect Cys675-Cys698 and Cys677-Cys719. In terms of domain architecture, LRRNT 4 spans 725-761 (EVGCLPRPQCPQECACLDTVVRCSNKHLQALPKGIPK). 3 N-linked (GlcNAc...) asparagine glycosylation sites follow: Asn762, Asn801, and Asn806. LRR repeat units lie at residues 762 to 783 (NVTE…LSTF), 785 to 806 (YLQL…SFTN), 809 to 830 (QLTT…AFQG), and 833 to 854 (SLRL…IFAD). The region spanning 866–916 (NPLYCDCHLRWLSSWVKTGYKEPGIARCAGPPEMEGKLLLTTPAKKFECQG) is the LRRCT 4 domain. EGF-like domains are found at residues 927-962 (DPCL…RNCE), 964-1003 (SLDS…LTCG), 1005-1041 (NTDD…RACE), 1043-1081 (LVDF…DNCS), 1083-1119 (NQDD…QLCE), and 1124-1160 (PRNS…PECE). Intrachain disulfides connect Cys929/Cys940, Cys934/Cys950, Cys952/Cys961, Cys968/Cys979, Cys973/Cys991, Cys993/Cys1002, Cys1009/Cys1020, Cys1014/Cys1029, Cys1031/Cys1040, Cys1047/Cys1060, Cys1054/Cys1069, Cys1071/Cys1080, Cys1087/Cys1098, Cys1092/Cys1107, Cys1109/Cys1118, Cys1128/Cys1139, Cys1133/Cys1148, and Cys1150/Cys1159. N-linked (GlcNAc...) asparagine glycosylation is present at Asn1026. Asn1079 is a glycosylation site (N-linked (GlcNAc...) asparagine). Residues 1163–1336 (LSVNFVDRDT…QMKPGVVPGC (174 aa)) form the Laminin G-like domain. N-linked (GlcNAc...) asparagine glycans are attached at residues Asn1186, Asn1256, and Asn1303. 14 disulfide bridges follow: Cys1310–Cys1336, Cys1339–Cys1349, Cys1344–Cys1359, Cys1361–Cys1370, Cys1378–Cys1388, Cys1383–Cys1398, Cys1400–Cys1409, Cys1419–Cys1429, Cys1424–Cys1439, Cys1441–Cys1450, Cys1456–Cys1495, Cys1474–Cys1509, Cys1485–Cys1525, and Cys1489–Cys1527. 3 EGF-like domains span residues 1337 to 1371 (EPCR…LHCD), 1374 to 1410 (VDGP…ALCN), and 1415 to 1451 (VAEP…ELCE). Positions 1456 to 1531 (CRGDPVRDFH…PTKCGCAPCA (76 aa)) constitute a CTCK domain.

In terms of assembly, interacts with ROBO1 and GREM1. In adult brains expressed in the hippocampus, cerebral cortex, and olfactory bulb but not in the cerebellum. In embryo expressed in cerebral cortex.

The protein resides in the secreted. Thought to act as molecular guidance cue in cellular migration, and function appears to be mediated by interaction with roundabout homolog receptors. During neural development involved in axonal navigation at the ventral midline of the neural tube and projection of axons to different regions. SLIT1 and SLIT2 together seem to be essential for midline guidance in the forebrain by acting as repulsive signal preventing inappropriate midline crossing by axons projecting from the olfactory bulb. This Rattus norvegicus (Rat) protein is Slit homolog 1 protein (Slit1).